A 309-amino-acid chain; its full sequence is MEGTGVVAVYGNGAITEAKKSPFSVKVGLAQMLRGGVIMDVVNAEQARIAEEAGACAVMALERVPADIRAQGGVARMSDPQMIKEIKQAVTIPVMAKARIGHFVEAQILEAIGIDYIDESEVLTLADEDHHINKHNFRIPFVCGCRNLGEALRRIREGAAMIRTKGEAGTGNIIEAVRHVRSVNGDIRVLRNMDDDEVFTFAKKLAAPYDLVMQTKQLGRLPVVQFAAGGVATPADAALMMQLGCDGVFVGSGIFKSGDPARRARAIVQAVTHYSDPEMLVEVSCGLGEAMVGINLNDEKVERFANRSE.

M1 carries the post-translational modification N-acetylmethionine. D-ribose 5-phosphate is bound at residue D40. K97 acts as the Schiff-base intermediate with D-ribose 5-phosphate in catalysis. Residue G169 participates in D-ribose 5-phosphate binding. Position 181 (R181) interacts with D-glyceraldehyde 3-phosphate. D-ribose 5-phosphate is bound by residues G230 and 251-252 (GS).

The protein belongs to the PdxS/SNZ family. Homodimer or heterodimer with PDX1.1 or PDX1.2. Interacts with PDX2. Expressed in cotyledons, rapidly dividing root stele tissues, stems, leaves, flowers, mature pollen, and siliques.

It localises to the cytoplasm. It is found in the cell membrane. The protein resides in the membrane. The catalysed reaction is aldehydo-D-ribose 5-phosphate + D-glyceraldehyde 3-phosphate + L-glutamine = pyridoxal 5'-phosphate + L-glutamate + phosphate + 3 H2O + H(+). It functions in the pathway cofactor biosynthesis; pyridoxal 5'-phosphate biosynthesis. Its function is as follows. Catalyzes the formation of pyridoxal 5'-phosphate from ribose 5-phosphate (RBP), glyceraldehyde 3-phosphate (G3P) and ammonia. The ammonia is provided by PDX2. Can also use ribulose 5-phosphate and dihydroxyacetone phosphate as substrates, resulting from enzyme-catalyzed isomerization of RBP and G3P, respectively. Also plays an indirect role in resistance to singlet oxygen-generating photosensitizers. The chain is Pyridoxal 5'-phosphate synthase subunit PDX1.3 (PDX13) from Arabidopsis thaliana (Mouse-ear cress).